The primary structure comprises 539 residues: Putative serine/threonine-protein kinase L670 (539 aa).

The region spanning 1–115 (MSLFNNHPEL…ILKVFKFGLH (115 aa)) is the Cyclin N-terminal domain. The region spanning 258-519 (MNVIEKLGIG…VLKIFSECFV (262 aa)) is the Protein kinase domain. Residues 264 to 272 (LGIGSFGLV) and K285 contribute to the ATP site. Residue D375 is the Proton acceptor of the active site.

This sequence belongs to the protein kinase superfamily. Ser/Thr protein kinase family.

It catalyses the reaction L-seryl-[protein] + ATP = O-phospho-L-seryl-[protein] + ADP + H(+). It carries out the reaction L-threonyl-[protein] + ATP = O-phospho-L-threonyl-[protein] + ADP + H(+). This Acanthamoeba polyphaga mimivirus (APMV) protein is Putative serine/threonine-protein kinase L670.